Reading from the N-terminus, the 117-residue chain is NADH-ubiquinone oxidoreductase chain 3 (117 aa).

Transmembrane regions (helical) follow at residues 8-28 (LIYF…SFIF), 61-81 (LVAI…PWAV), and 86-106 (IGFF…IGFI).

It belongs to the complex I subunit 3 family.

It localises to the mitochondrion membrane. The catalysed reaction is a ubiquinone + NADH + 5 H(+)(in) = a ubiquinol + NAD(+) + 4 H(+)(out). Core subunit of the mitochondrial membrane respiratory chain NADH dehydrogenase (Complex I) that is believed to belong to the minimal assembly required for catalysis. Complex I functions in the transfer of electrons from NADH to the respiratory chain. The immediate electron acceptor for the enzyme is believed to be ubiquinone. This is NADH-ubiquinone oxidoreductase chain 3 (ND3) from Tetraselmis subcordiformis (Marine green alga).